The sequence spans 525 residues: Protein disulfide-isomerase A2 (525 aa).

An N-terminal signal peptide occupies residues 1–21 (MSRQLLPVLLLLLLRASCPWG). One can recognise a Thioredoxin 1 domain in the interval 27–152 (RSPSEEPPEE…IAEWLRRRVG (126 aa)). Active-site nucleophile residues include Cys71 and Cys74. A disulfide bridge links Cys71 with Cys74. N-linked (GlcNAc...) asparagine glycans are attached at residues Asn127 and Asn284. The region spanning 367–496 (VLNGQVKPYL…FSKFLDNGGV (130 aa)) is the Thioredoxin 2 domain. Active-site nucleophile residues include Cys418 and Cys421. A disulfide bond links Cys418 and Cys421. Residues 492–525 (DNGGVLPTEEPPEEPAAPFPEPPANSTMGSKEEL) are disordered. A compositionally biased stretch (pro residues) spans 505 to 514 (EPAAPFPEPP). N-linked (GlcNAc...) asparagine glycosylation is present at Asn516. The segment covering 516–525 (NSTMGSKEEL) has biased composition (polar residues). The short motif at 522–525 (KEEL) is the Prevents secretion from ER element.

Belongs to the protein disulfide isomerase family. In terms of assembly, monomer; predominantly as monomer under reducing conditions. Homodimer; disulfide-linked. Part of a large chaperone multiprotein complex comprising DNAJB11, HSP90B1, HSPA5, HYOU, PDIA2, PDIA4, PDIA6, PPIB, SDF2L1, UGGT1 and very small amounts of ERP29, but not, or at very low levels, CALR nor CANX. Post-translationally, the disulfide-linked homodimer exhibits an enhanced chaperone activity. In terms of processing, glycosylated. As to expression, highly expressed in pancreas (at protein level).

Its subcellular location is the endoplasmic reticulum lumen. It catalyses the reaction Catalyzes the rearrangement of -S-S- bonds in proteins.. In terms of biological role, acts as an intracellular estrogen-binding protein. May be involved in modulating cellular levels and biological functions of estrogens in the pancreas. May act as a chaperone that inhibits aggregation of misfolded proteins. This is Protein disulfide-isomerase A2 (PDIA2) from Homo sapiens (Human).